Here is a 455-residue protein sequence, read N- to C-terminus: Probable Xaa-Pro aminopeptidase GSTUM_00008071001 (455 aa).

Mn(2+) is bound by residues Asp251, Asp262, Glu386, and Glu426.

The protein belongs to the peptidase M24B family. Requires Mn(2+) as cofactor.

It carries out the reaction Release of any N-terminal amino acid, including proline, that is linked to proline, even from a dipeptide or tripeptide.. Functionally, catalyzes the removal of a penultimate prolyl residue from the N-termini of peptides. The chain is Probable Xaa-Pro aminopeptidase GSTUM_00008071001 from Tuber melanosporum (strain Mel28) (Perigord black truffle).